The chain runs to 271 residues: ATP synthase subunit a (271 aa).

5 helical membrane passes run 47–67, 107–127, 133–153, 209–229, and 235–255; these read WENI…AYLG, FLGT…VPLM, SLNI…FLNI, ILIG…ETFV, and LPFM…FTLL.

The protein belongs to the ATPase A chain family. F-type ATPases have 2 components, CF(1) - the catalytic core - and CF(0) - the membrane proton channel. CF(1) has five subunits: alpha(3), beta(3), gamma(1), delta(1), epsilon(1). CF(0) has three main subunits: a(1), b(2) and c(9-12). The alpha and beta chains form an alternating ring which encloses part of the gamma chain. CF(1) is attached to CF(0) by a central stalk formed by the gamma and epsilon chains, while a peripheral stalk is formed by the delta and b chains.

Its subcellular location is the cell inner membrane. Functionally, key component of the proton channel; it plays a direct role in the translocation of protons across the membrane. This Protochlamydia amoebophila (strain UWE25) protein is ATP synthase subunit a.